The following is a 166-amino-acid chain: NAD(P)H-quinone oxidoreductase subunit I, chloroplastic (166 aa).

4Fe-4S ferredoxin-type domains are found at residues 55 to 84 (GRIH…VDWK) and 95 to 124 (LNYS…MTEE). 8 residues coordinate [4Fe-4S] cluster: Cys64, Cys67, Cys70, Cys74, Cys104, Cys107, Cys110, and Cys114.

The protein belongs to the complex I 23 kDa subunit family. As to quaternary structure, NDH is composed of at least 16 different subunits, 5 of which are encoded in the nucleus. It depends on [4Fe-4S] cluster as a cofactor.

The protein resides in the plastid. It is found in the chloroplast thylakoid membrane. It carries out the reaction a plastoquinone + NADH + (n+1) H(+)(in) = a plastoquinol + NAD(+) + n H(+)(out). It catalyses the reaction a plastoquinone + NADPH + (n+1) H(+)(in) = a plastoquinol + NADP(+) + n H(+)(out). NDH shuttles electrons from NAD(P)H:plastoquinone, via FMN and iron-sulfur (Fe-S) centers, to quinones in the photosynthetic chain and possibly in a chloroplast respiratory chain. The immediate electron acceptor for the enzyme in this species is believed to be plastoquinone. Couples the redox reaction to proton translocation, and thus conserves the redox energy in a proton gradient. This Pericome caudata (Mountain tail-leaf) protein is NAD(P)H-quinone oxidoreductase subunit I, chloroplastic.